The sequence spans 77 residues: Major pilus subunit operon regulatory protein (77 aa).

The protein to E.coli AfaF and DaaF.

Plays a role in the inhibition of methylation at the GATC1028 site located in the regulatory region upstream of the pabA promoter. May, in conjunction with the Mbf (methylation blocking factor), inhibits deoxyadenosine methylase from methylating the GATC1028 site. In Escherichia coli, this protein is Major pilus subunit operon regulatory protein (papI).